The following is a 153-amino-acid chain: Large ribosomal subunit protein uL15 (153 aa).

Residues 1–49 (MQLHNLYPFPEERKTRRRVGRGSGSGLGCTAGKGHKGQNARAGGGVAPG) are disordered. Over residues 21-31 (RGSGSGLGCTA) the composition is skewed to gly residues.

This sequence belongs to the universal ribosomal protein uL15 family. In terms of assembly, part of the 50S ribosomal subunit.

Functionally, binds to the 23S rRNA. This Desulfovibrio desulfuricans (strain ATCC 27774 / DSM 6949 / MB) protein is Large ribosomal subunit protein uL15.